Here is a 780-residue protein sequence, read N- to C-terminus: ATP-dependent 6-phosphofructokinase, liver type (780 aa).

Position 2 is an N-acetylalanine (A2). The N-terminal catalytic PFK domain 1 stretch occupies residues 2–390 (ASVDLEKLRT…NWNIYKLLSH (389 aa)). ATP is bound by residues G25, 88-89 (RC), and 118-121 (GDGS). D119 provides a ligand contact to Mg(2+). Substrate is bound by residues 164–166 (SID), R201, 208–210 (MGR), E264, R292, and 298–301 (HVQR). D166 serves as the catalytic Proton acceptor. Phosphoserine is present on S377. The interval 391-400 (QKISKEKTNF) is interdomain linker. The interval 401-780 (SLAILNVGAP…RRTLSIETGF (380 aa)) is C-terminal regulatory PFK domain 2. Beta-D-fructose 2,6-bisphosphate contacts are provided by residues R470, 527 to 531 (TISNN), R565, 572 to 574 (MGG), and E628. S529 carries O-linked (GlcNAc) serine glycosylation. Residue Y640 is modified to Phosphotyrosine. Residues R654, 660–663 (HLQQ), and R734 contribute to the beta-D-fructose 2,6-bisphosphate site. S775 is modified (phosphoserine).

This sequence belongs to the phosphofructokinase type A (PFKA) family. ATP-dependent PFK group I subfamily. Eukaryotic two domain clade 'E' sub-subfamily. In terms of assembly, homo- and heterotetramers. Phosphofructokinase (PFK) enzyme functions as a tetramer composed of different combinations of 3 types of subunits, called PFKM (M), PFKL (L) and PFKP (P). The composition of the PFK tetramer differs according to the tissue type it is present in. The kinetic and regulatory properties of the tetrameric enzyme are dependent on the subunit composition, hence can vary across tissues. Mg(2+) serves as cofactor. In terms of processing, glcNAcylation at Ser-529 by OGT decreases enzyme activity, leading to redirect glucose flux through the oxidative pentose phosphate pathway. Glycosylation is stimulated by both hypoxia and glucose deprivation.

It localises to the cytoplasm. It carries out the reaction beta-D-fructose 6-phosphate + ATP = beta-D-fructose 1,6-bisphosphate + ADP + H(+). It functions in the pathway carbohydrate degradation; glycolysis; D-glyceraldehyde 3-phosphate and glycerone phosphate from D-glucose: step 3/4. With respect to regulation, allosterically activated by ADP, AMP, or fructose 2,6-bisphosphate, and allosterically inhibited by ATP or citrate. GlcNAcylation by OGT overcomes allosteric regulation. Functionally, catalyzes the phosphorylation of D-fructose 6-phosphate to fructose 1,6-bisphosphate by ATP, the first committing step of glycolysis. Negatively regulates the phagocyte oxidative burst in response to bacterial infection by controlling cellular NADPH biosynthesis and NADPH oxidase-derived reactive oxygen species. Upon macrophage activation, drives the metabolic switch toward glycolysis, thus preventing glucose turnover that produces NADPH via pentose phosphate pathway. In Bos taurus (Bovine), this protein is ATP-dependent 6-phosphofructokinase, liver type (PFKL).